Consider the following 223-residue polypeptide: Large ribosomal subunit protein uL6c (223 aa).

The transit peptide at Met-1 to Cys-41 directs the protein to the chloroplast.

Belongs to the universal ribosomal protein uL6 family. As to quaternary structure, part of the 50S ribosomal subunit.

The protein localises to the plastid. Its subcellular location is the chloroplast. Functionally, this protein binds directly to 23S ribosomal RNA and is located at the aminoacyl-tRNA binding site of the peptidyltransferase center. The polypeptide is Large ribosomal subunit protein uL6c (RPL6) (Arabidopsis thaliana (Mouse-ear cress)).